The primary structure comprises 161 residues: ATP synthase subunit b 2 (161 aa).

Residues 13 to 33 (IVWLVIALVAMYFVMSRLAIP) form a helical membrane-spanning segment.

Belongs to the ATPase B chain family. In terms of assembly, F-type ATPases have 2 components, F(1) - the catalytic core - and F(0) - the membrane proton channel. F(1) has five subunits: alpha(3), beta(3), gamma(1), delta(1), epsilon(1). F(0) has three main subunits: a(1), b(2) and c(10-14). The alpha and beta chains form an alternating ring which encloses part of the gamma chain. F(1) is attached to F(0) by a central stalk formed by the gamma and epsilon chains, while a peripheral stalk is formed by the delta and b chains.

Its subcellular location is the cell inner membrane. Its function is as follows. F(1)F(0) ATP synthase produces ATP from ADP in the presence of a proton or sodium gradient. F-type ATPases consist of two structural domains, F(1) containing the extramembraneous catalytic core and F(0) containing the membrane proton channel, linked together by a central stalk and a peripheral stalk. During catalysis, ATP synthesis in the catalytic domain of F(1) is coupled via a rotary mechanism of the central stalk subunits to proton translocation. Functionally, component of the F(0) channel, it forms part of the peripheral stalk, linking F(1) to F(0). The b'-subunit is a diverged and duplicated form of b found in plants and photosynthetic bacteria. The chain is ATP synthase subunit b 2 (atpF2) from Rhodospirillum rubrum (strain ATCC 11170 / ATH 1.1.1 / DSM 467 / LMG 4362 / NCIMB 8255 / S1).